The chain runs to 402 residues: Xylose/arabinose-binding protein XylF (402 aa).

The helical transmembrane segment at 38–58 threads the bilayer; that stretch reads GIIAGVLAAFGAGFGSGYVTA.

Belongs to the bacterial solute-binding protein 2 family. The complex is composed of two ATP-binding proteins (XylG), two transmembrane proteins (XylH) and a solute-binding protein (XylF).

The protein resides in the cell membrane. Part of the ABC transporter complex XylFGH involved in the uptake of xylose and arabinose. The sequence is that of Xylose/arabinose-binding protein XylF from Sulfolobus acidocaldarius (strain ATCC 33909 / DSM 639 / JCM 8929 / NBRC 15157 / NCIMB 11770).